Here is a 783-residue protein sequence, read N- to C-terminus: Type 4 coupling protein DotL (783 aa).

A helical transmembrane segment spans residues 47 to 67; the sequence is VSYYFSEAATFLLIMGGIFFL. Residues 100-500 are ATPase domain; it reads NIARGITFFG…ICMKLEDPTE (401 aa). The interval 671–773 is interaction with IcmS/IcmW; sequence VEGALTIFSK…SAKISAEREK (103 aa).

The T4BSS is a complex nanomachine composed of several subcomplexes. This subunit is part of the Type IV Coupling Complex (T4CC), a subcomplex composed of the DotLMNYZ core and the IcmSW-LvgA adapter subunits, linked by the C-terminal tail of DotL. Six DotLMNYZ hetero-pentameric units may assemble into a hexameric nanomachine, forming an inner membrane channel for effectors to pass through. Interacts directly with DotM. Interacts directly, via its C-terminal region, with the type IV adapter proteins IcmS and IcmW. Also interacts with DotN and LvgA via its C-terminal region.

The protein localises to the cell inner membrane. Functionally, component of the Dot/Icm type IVB secretion system (T4BSS), which is used to inject bacterial effector proteins into eukaryotic host cells. Part of a subcomplex which recruits effector proteins and delivers them to the core transmembrane subcomplex. Plays a central role in the assembly of the subcomplex. Required for the recruitment of IcmS and IcmW to the inner membrane and for the translocation of adapter-dependent substrates. May have ATPase activity. The polypeptide is Type 4 coupling protein DotL (Legionella pneumophila subsp. pneumophila (strain Philadelphia 1 / ATCC 33152 / DSM 7513)).